A 95-amino-acid chain; its full sequence is Alpha-conotoxin VxXXB (95 aa).

The N-terminal stretch at 1–24 (MPKLAVVLLVLLILPLSYFDAAGG) is a signal peptide. Positions 25 to 45 (QAVQGDWRGNRLARDLQRGGR) are excised as a propeptide. A 4-carboxyglutamate mark is found at glutamate 48 and glutamate 50. Position 59 is a 4-hydroxyproline; partial (proline 59). 4 disulfide bridges follow: cysteine 64–cysteine 73, cysteine 69–cysteine 81, cysteine 74–cysteine 91, and cysteine 79–cysteine 93. The residue at position 75 (proline 75) is a 4-hydroxyproline; partial. Proline 94 bears the 4-hydroxyproline; partial mark. Position 94 is a proline amide; in form [desGly-95]VxXXB (proline 94).

It belongs to the conotoxin D superfamily. Homodimer. Pseudo-homodimer (identical sequence, different post-translational modifications). In terms of tissue distribution, expressed by the venom duct.

It is found in the secreted. Its function is as follows. Alpha-conotoxins act on postsynaptic membranes, they bind to the nicotinic acetylcholine receptors (nAChR) and thus inhibit them. Through its two C-terminal domains, this homodimeric protein would bind to two nAChR allosteric sites, located outside the nAChR C-loop of the principal binding face and at the adjacent binding interface in a clockwise direction. It specifically blocks mammalian neuronal nAChR of the alpha-7/CHRNA7 (IC(50)=0.4 nM), alpha-3-beta-2/CHRNA3-CHRNB2 (IC(50)=8.4 nM) and alpha-4-beta-2/CHRNA4-CHRNB2 (IC(50)=228 nM) subtypes. It inhibits alpha-7/CHRNA7, alpha-3-beta-2/CHRNA3-CHRNB2 and alpha-4-beta-2/CHRNA4-CHRNB2 nAChR subtypes more efficiently than VxXXA and VxXXC. This is Alpha-conotoxin VxXXB from Conus vexillum (Flag cone).